The sequence spans 131 residues: Methylated-DNA--protein-cysteine methyltransferase (131 aa).

Cys98 (nucleophile; methyl group acceptor) is an active-site residue.

Belongs to the MGMT family.

It is found in the cytoplasm. The enzyme catalyses a 6-O-methyl-2'-deoxyguanosine in DNA + L-cysteinyl-[protein] = S-methyl-L-cysteinyl-[protein] + a 2'-deoxyguanosine in DNA. It carries out the reaction a 4-O-methyl-thymidine in DNA + L-cysteinyl-[protein] = a thymidine in DNA + S-methyl-L-cysteinyl-[protein]. Its function is as follows. Involved in the cellular defense against the biological effects of O6-methylguanine (O6-MeG) and O4-methylthymine (O4-MeT) in DNA. Repairs the methylated nucleobase in DNA by stoichiometrically transferring the methyl group to a cysteine residue in the enzyme. This is a suicide reaction: the enzyme is irreversibly inactivated. This Methanopyrus kandleri (strain AV19 / DSM 6324 / JCM 9639 / NBRC 100938) protein is Methylated-DNA--protein-cysteine methyltransferase (ogt).